The following is a 333-amino-acid chain: Fructose-1,6-bisphosphatase class 1 (333 aa).

The Mg(2+) site is built by E90, D112, L114, and D115. Residues 115-118 (DGSS), N207, and K273 each bind substrate. E279 serves as a coordination point for Mg(2+).

The protein belongs to the FBPase class 1 family. As to quaternary structure, homotetramer. Requires Mg(2+) as cofactor.

The protein resides in the cytoplasm. It carries out the reaction beta-D-fructose 1,6-bisphosphate + H2O = beta-D-fructose 6-phosphate + phosphate. The protein operates within carbohydrate biosynthesis; gluconeogenesis. The sequence is that of Fructose-1,6-bisphosphatase class 1 from Aromatoleum aromaticum (strain DSM 19018 / LMG 30748 / EbN1) (Azoarcus sp. (strain EbN1)).